Reading from the N-terminus, the 59-residue chain is uncharacterized protein (59 aa).

A signal peptide spans 1–17 (MIASIWYAELGCASAIA).

This is an uncharacterized protein from Rickettsia prowazekii (strain Madrid E).